A 199-amino-acid chain; its full sequence is 7-methyl-GTP pyrophosphatase (199 aa).

Asp-72 acts as the Proton acceptor in catalysis.

It belongs to the Maf family. YceF subfamily. Requires a divalent metal cation as cofactor.

It localises to the cytoplasm. The catalysed reaction is N(7)-methyl-GTP + H2O = N(7)-methyl-GMP + diphosphate + H(+). Nucleoside triphosphate pyrophosphatase that hydrolyzes 7-methyl-GTP (m(7)GTP). May have a dual role in cell division arrest and in preventing the incorporation of modified nucleotides into cellular nucleic acids. The sequence is that of 7-methyl-GTP pyrophosphatase from Alkalilimnicola ehrlichii (strain ATCC BAA-1101 / DSM 17681 / MLHE-1).